The sequence spans 436 residues: T-box transcription factor TBX6 (436 aa).

The segment at residues 100-273 (LWKEFSSVGT…ANPFAKGFRE (174 aa)) is a DNA-binding region (T-box). A compositionally biased stretch (basic and acidic residues) spans 271–284 (FRENGRNCKRERDA). Disordered stretches follow at residues 271–339 (FREN…APAP) and 360–379 (PSHLPTRSPSFPEAPDSGRS). The segment covering 325-339 (EQAPAPGEATAAPAP) has biased composition (low complexity).

As to quaternary structure, forms a dimeric complex with DNA (in vitro). Expressed in fetal tail bud, posterior spinal tissue, intervertebral disk and testis. Also expressed in adult testis, kidney, lung, muscle and thymus.

The protein resides in the nucleus. Functionally, T-box transcription factor that plays an essential role in the determination of the fate of axial stem cells: neural vs mesodermal. Acts in part by down-regulating, a specific enhancer (N1) of SOX2, to inhibit neural development. Seems to play also an essential role in left/right axis determination and acts through effects on Notch signaling around the node as well as through an effect on the morphology and motility of the nodal cilia. This is T-box transcription factor TBX6 (TBX6) from Homo sapiens (Human).